We begin with the raw amino-acid sequence, 37 residues long: Delta-amaurobitoxin-Pl1a (37 aa).

Intrachain disulfides connect C2–C18, C9–C23, C17–C33, and C25–C31. The residue at position 37 (S37) is a Serine amide.

It belongs to the neurotoxin 07 (Beta/delta-agtx) family. 02 (aga-3) subfamily. Expressed by the venom gland.

Its subcellular location is the secreted. Its function is as follows. Binds at site 4 of sodium channels (Nav) and inhibits the fast inactivation of cockroach channels. This toxin is active only on insects. Has a potent activity against S.litura larvae. This chain is Delta-amaurobitoxin-Pl1a, found in Pireneitega luctuosa (Tangled nest spider).